The primary structure comprises 318 residues: tRNA pseudouridine synthase B (318 aa).

D54 acts as the Nucleophile in catalysis.

Belongs to the pseudouridine synthase TruB family. Type 1 subfamily.

It catalyses the reaction uridine(55) in tRNA = pseudouridine(55) in tRNA. In terms of biological role, responsible for synthesis of pseudouridine from uracil-55 in the psi GC loop of transfer RNAs. This Ralstonia pickettii (strain 12J) protein is tRNA pseudouridine synthase B.